Consider the following 152-residue polypeptide: UPF0266 membrane protein plu2700 (152 aa).

A run of 3 helical transmembrane segments spans residues 6-26 (IALTGLIVLMLAFAVYDEFVV), 45-65 (IDALIFIILILIVVYNNITVY), and 67-87 (SRLTTYLLLFTILVTIYIAYI).

Belongs to the UPF0266 family.

It is found in the cell inner membrane. The protein is UPF0266 membrane protein plu2700 of Photorhabdus laumondii subsp. laumondii (strain DSM 15139 / CIP 105565 / TT01) (Photorhabdus luminescens subsp. laumondii).